Consider the following 1265-residue polypeptide: DNA-directed RNA polymerase subunit beta'' (1265 aa).

Positions 223, 297, 304, and 307 each coordinate Zn(2+).

It belongs to the RNA polymerase beta' chain family. RpoC2 subfamily. As to quaternary structure, in plastids the minimal PEP RNA polymerase catalytic core is composed of four subunits: alpha, beta, beta', and beta''. When a (nuclear-encoded) sigma factor is associated with the core the holoenzyme is formed, which can initiate transcription. It depends on Zn(2+) as a cofactor.

It localises to the plastid. The protein localises to the cyanelle. It carries out the reaction RNA(n) + a ribonucleoside 5'-triphosphate = RNA(n+1) + diphosphate. DNA-dependent RNA polymerase catalyzes the transcription of DNA into RNA using the four ribonucleoside triphosphates as substrates. The polypeptide is DNA-directed RNA polymerase subunit beta'' (Cyanophora paradoxa).